A 268-amino-acid polypeptide reads, in one-letter code: Tryptophan synthase alpha chain (268 aa).

Catalysis depends on proton acceptor residues Glu49 and Asp60.

The protein belongs to the TrpA family. As to quaternary structure, tetramer of two alpha and two beta chains.

The catalysed reaction is (1S,2R)-1-C-(indol-3-yl)glycerol 3-phosphate + L-serine = D-glyceraldehyde 3-phosphate + L-tryptophan + H2O. The protein operates within amino-acid biosynthesis; L-tryptophan biosynthesis; L-tryptophan from chorismate: step 5/5. Functionally, the alpha subunit is responsible for the aldol cleavage of indoleglycerol phosphate to indole and glyceraldehyde 3-phosphate. The polypeptide is Tryptophan synthase alpha chain (Vibrio vulnificus (strain YJ016)).